The primary structure comprises 281 residues: Protoheme IX farnesyltransferase (281 aa).

The next 9 helical transmembrane spans lie at 13-33 (VIWL…GPLV), 38-58 (LIEL…FNMY), 85-105 (ALTF…LWLG), 107-127 (WVTL…TIML), 132-152 (WLNI…GWIM), 161-181 (ILLS…LAYY), 206-226 (IISI…QLYM), 227-247 (AKLI…IVTI), and 261-281 (MFKA…ISRI).

The protein belongs to the UbiA prenyltransferase family. Protoheme IX farnesyltransferase subfamily.

The protein resides in the cell membrane. It catalyses the reaction heme b + (2E,6E)-farnesyl diphosphate + H2O = Fe(II)-heme o + diphosphate. It participates in porphyrin-containing compound metabolism; heme O biosynthesis; heme O from protoheme: step 1/1. In terms of biological role, converts heme B (protoheme IX) to heme O by substitution of the vinyl group on carbon 2 of heme B porphyrin ring with a hydroxyethyl farnesyl side group. In Caldivirga maquilingensis (strain ATCC 700844 / DSM 13496 / JCM 10307 / IC-167), this protein is Protoheme IX farnesyltransferase.